The primary structure comprises 614 residues: MAGIARLPESVANKISAGEVVQRPVSVVKELLENAIDAGADRISVIISDAGKELVRIVDNGCGMERDDALLSVERFATSKIRGVEDLEDLSSLGFRGEALASISSVSHFELRTAVEGSPLALSFRYEGGVLVEEARVQGERGTSISVRNLFYNVPARRKFLKSNATEYGHIYELVRSFVLACPEISWQMVNDGEELFNFRTPDLNERLDFFYGSGFAESLVPVTEENDYISIRGFIGRPALQKRRRLDQYFFINRRLVQNRMLSQALQQAYGELLVERQAPFALLFFEMDPSRIDVNVHPAKLEVRFEDERSVRNMFYPVIKRAVRSYDFSPDLASGELPPLSTRYPSPSPIAFQDVAEPAVTKGELYRNYREGAFSTSRPQDNLPEGFQEQLFSPPEPPAGFVGTASLAGSGGNEDEVPLGDAVAEVKIWQLHNKYLICQIKTGLMIIDQHVAHERVLYERAVDVMETSVPNSQQLLFPQKVELRPWDWEIFEEIRDDLYRLGFNLSLFGSRTVMIEGVPQDVRPGSEVSILQDMIAEYSENASKLKLEKRDNLAKSYSCRNAIMTGQKLSLQEMRSLIDSLFATRDPYCCPHGRPVIIKMTLGQLDHMFGRK.

The protein belongs to the DNA mismatch repair MutL/HexB family.

Functionally, this protein is involved in the repair of mismatches in DNA. It is required for dam-dependent methyl-directed DNA mismatch repair. May act as a 'molecular matchmaker', a protein that promotes the formation of a stable complex between two or more DNA-binding proteins in an ATP-dependent manner without itself being part of a final effector complex. This Chlorobium phaeovibrioides (strain DSM 265 / 1930) (Prosthecochloris vibrioformis (strain DSM 265)) protein is DNA mismatch repair protein MutL.